Reading from the N-terminus, the 844-residue chain is Probable inorganic carbon transporter subunit DabA 1 (844 aa).

The Zn(2+) site is built by C359, D361, H543, and C558.

Belongs to the inorganic carbon transporter (TC 9.A.2) DabA family. As to quaternary structure, forms a complex with DabB. Zn(2+) is required as a cofactor.

The protein resides in the cell inner membrane. Its function is as follows. Part of an energy-coupled inorganic carbon pump. This is Probable inorganic carbon transporter subunit DabA 1 from Bradyrhizobium sp. (strain BTAi1 / ATCC BAA-1182).